The following is an 82-amino-acid chain: Small ribosomal subunit protein bS16 (82 aa).

This sequence belongs to the bacterial ribosomal protein bS16 family.

In Deinococcus geothermalis (strain DSM 11300 / CIP 105573 / AG-3a), this protein is Small ribosomal subunit protein bS16.